Here is a 205-residue protein sequence, read N- to C-terminus: Nitrophorin-7 (205 aa).

Residues 1 to 20 form the signal peptide; that stretch reads MELYTALLAVTILSPSSIVG. 2 disulfide bridges follow: C25-C144 and C62-C193. D52 contributes to the histamine binding site. 2 residues coordinate heme: H80 and N91. Residue D154 coordinates histamine.

Belongs to the calycin superfamily. Nitrophorin family. In terms of assembly, forms oligomers (at pH 5.5). It depends on heme b as a cofactor. Expressed in the endothelial cells of the salivary glands.

The protein localises to the secreted. It catalyses the reaction 3 nitrite + 2 H(+) = 2 nitric oxide + nitrate + H2O. In terms of biological role, converts nitrite as the sole substrate to form nitric oxide gas (NO). NO(2-) serves both as an electron donor and as an electron acceptor. Binds to negatively charged cell surfaces of activated platelets; binds to L-a-phosphatidyl-L-serine (PS)-bearing phospholipid membranes. Once bound on an activated platelet, NP7 releases its stored nitric oxide gas (NO) into the victim's tissues while feeding, resulting in vasodilation and inhibition of platelet aggregation. Also acts as an anticoagulant by blocking coagulation-factor binding sites. Has antihistamine activity; binds histamine with high affinity. The polypeptide is Nitrophorin-7 (Rhodnius prolixus (Triatomid bug)).